A 447-amino-acid polypeptide reads, in one-letter code: Phosphoglucosamine mutase (447 aa).

The Phosphoserine intermediate role is filled by S102. Mg(2+) contacts are provided by S102, D241, D243, and D245. S102 bears the Phosphoserine mark.

The protein belongs to the phosphohexose mutase family. Requires Mg(2+) as cofactor. Post-translationally, activated by phosphorylation.

The catalysed reaction is alpha-D-glucosamine 1-phosphate = D-glucosamine 6-phosphate. Functionally, catalyzes the conversion of glucosamine-6-phosphate to glucosamine-1-phosphate. This chain is Phosphoglucosamine mutase, found in Methylococcus capsulatus (strain ATCC 33009 / NCIMB 11132 / Bath).